The sequence spans 409 residues: Arginine deiminase (409 aa).

The Amidino-cysteine intermediate role is filled by Cys-397.

This sequence belongs to the arginine deiminase family.

The protein resides in the cytoplasm. The catalysed reaction is L-arginine + H2O = L-citrulline + NH4(+). It functions in the pathway amino-acid degradation; L-arginine degradation via ADI pathway; carbamoyl phosphate from L-arginine: step 1/2. The chain is Arginine deiminase (arcA) from Metamycoplasma hominis (Mycoplasma hominis).